A 246-amino-acid chain; its full sequence is Major prion protein (246 aa).

Residues 1-15 (MLVVFVATWSDLGLC) form the signal peptide. An interaction with GRB2, ERI3 and SYN1 region spans residues 16–223 (KKRPKPGGWN…ESQAYYQRGS (208 aa)). The interval 18-100 (RPKPGGWNTG…QWHKPSKPKT (83 aa)) is disordered. Tandem repeats lie at residues 44-52 (PQGGGGWGQ), 53-60 (PHGGGWGQ), 61-68 (PHGGGWGQ), 69-76 (PHGGGWGQ), and 77-84 (PHGGGWGQ). Residues 44-84 (PQGGGGWGQPHGGGWGQPHGGGWGQPHGGGWGQPHGGGWGQ) are 5 X 8 AA tandem repeats of P-H-G-G-G-W-G-Q. The span at 45-88 (QGGGGWGQPHGGGWGQPHGGGWGQPHGGGWGQPHGGGWGQGGGT) shows a compositional bias: gly residues. Residues His54, Gly55, Gly56, His62, Gly63, Gly64, His70, Gly71, Gly72, His78, Gly79, and Gly80 each coordinate Cu(2+). Positions 91–100 (QWHKPSKPKT) are enriched in basic residues. Residues Cys172 and Cys207 are joined by a disulfide bond. N-linked (GlcNAc...) asparagine glycans are attached at residues Asn174 and Asn190. Residue Ser223 is the site of GPI-anchor amidated serine attachment. Residues 224–246 (SMVLFSSPPVILLISFLIFLIVG) constitute a propeptide, removed in mature form.

This sequence belongs to the prion family. In terms of assembly, monomer and homodimer. Has a tendency to aggregate into amyloid fibrils containing a cross-beta spine, formed by a steric zipper of superposed beta-strands. Soluble oligomers may represent an intermediate stage on the path to fibril formation. Copper binding may promote oligomerization. Interacts with GRB2, APP, ERI3/PRNPIP and SYN1. Mislocalized cytosolically exposed PrP interacts with MGRN1; this interaction alters MGRN1 subcellular location and causes lysosomal enlargement. Interacts with KIAA1191.

Its subcellular location is the cell membrane. The protein resides in the golgi apparatus. Functionally, its primary physiological function is unclear. Has cytoprotective activity against internal or environmental stresses. May play a role in neuronal development and synaptic plasticity. May be required for neuronal myelin sheath maintenance. May play a role in iron uptake and iron homeostasis. Soluble oligomers are toxic to cultured neuroblastoma cells and induce apoptosis (in vitro). Association with GPC1 (via its heparan sulfate chains) targets PRNP to lipid rafts. Also provides Cu(2+) or Zn(2+) for the ascorbate-mediated GPC1 deaminase degradation of its heparan sulfate side chains. In Erythrocebus patas (Red guenon), this protein is Major prion protein (PRNP).